We begin with the raw amino-acid sequence, 322 residues long: Elongation factor P--(R)-beta-lysine ligase (322 aa).

75-77 contributes to the substrate binding site; that stretch reads SPE. ATP is bound at residue 99–101; the sequence is RNE. Tyr-117 provides a ligand contact to substrate. 241-242 lines the ATP pocket; that stretch reads EL. Glu-248 contacts substrate. Residue Gly-297 coordinates ATP.

It belongs to the class-II aminoacyl-tRNA synthetase family. EpmA subfamily. In terms of assembly, homodimer.

It catalyses the reaction D-beta-lysine + L-lysyl-[protein] + ATP = N(6)-((3R)-3,6-diaminohexanoyl)-L-lysyl-[protein] + AMP + diphosphate + H(+). Its function is as follows. With EpmB is involved in the beta-lysylation step of the post-translational modification of translation elongation factor P (EF-P). Catalyzes the ATP-dependent activation of (R)-beta-lysine produced by EpmB, forming a lysyl-adenylate, from which the beta-lysyl moiety is then transferred to the epsilon-amino group of a conserved specific lysine residue in EF-P. The chain is Elongation factor P--(R)-beta-lysine ligase from Avibacterium paragallinarum (Haemophilus gallinarum).